Here is a 195-residue protein sequence, read N- to C-terminus: Imidazoleglycerol-phosphate dehydratase (195 aa).

The protein belongs to the imidazoleglycerol-phosphate dehydratase family.

It localises to the cytoplasm. It carries out the reaction D-erythro-1-(imidazol-4-yl)glycerol 3-phosphate = 3-(imidazol-4-yl)-2-oxopropyl phosphate + H2O. It participates in amino-acid biosynthesis; L-histidine biosynthesis; L-histidine from 5-phospho-alpha-D-ribose 1-diphosphate: step 6/9. In Bacillus cytotoxicus (strain DSM 22905 / CIP 110041 / 391-98 / NVH 391-98), this protein is Imidazoleglycerol-phosphate dehydratase.